The primary structure comprises 691 residues: DNA ligase (691 aa).

NAD(+) contacts are provided by residues Asp-41–Asp-45, Ser-90–Leu-91, and Glu-130. The active-site N6-AMP-lysine intermediate is the Lys-132. Residues Arg-153, Glu-190, Lys-307, and Lys-331 each coordinate NAD(+). Cys-425, Cys-428, Cys-443, and Cys-449 together coordinate Zn(2+). Positions Ala-610–Arg-691 constitute a BRCT domain.

It belongs to the NAD-dependent DNA ligase family. LigA subfamily. It depends on Mg(2+) as a cofactor. Mn(2+) is required as a cofactor.

The catalysed reaction is NAD(+) + (deoxyribonucleotide)n-3'-hydroxyl + 5'-phospho-(deoxyribonucleotide)m = (deoxyribonucleotide)n+m + AMP + beta-nicotinamide D-nucleotide.. Functionally, DNA ligase that catalyzes the formation of phosphodiester linkages between 5'-phosphoryl and 3'-hydroxyl groups in double-stranded DNA using NAD as a coenzyme and as the energy source for the reaction. It is essential for DNA replication and repair of damaged DNA. This chain is DNA ligase, found in Burkholderia multivorans (strain ATCC 17616 / 249).